Consider the following 99-residue polypeptide: EPIDERMAL PATTERNING FACTOR-like protein 8 (99 aa).

Residues Met1–His35 form the signal peptide. Cystine bridges form between Cys53/Cys90, Cys57/Cys63, and Cys60/Cys92.

It belongs to the plant cysteine rich small secretory peptide family. Epidermal patterning factor subfamily.

The protein resides in the secreted. Functionally, controls stomatal patterning. This Arabidopsis thaliana (Mouse-ear cress) protein is EPIDERMAL PATTERNING FACTOR-like protein 8.